Reading from the N-terminus, the 129-residue chain is Large ribosomal subunit protein bL21 (129 aa).

Positions 100–129 (DGAKPSKKAAEKKAPKAAPKKAAAKAESAE) are disordered.

Belongs to the bacterial ribosomal protein bL21 family. As to quaternary structure, part of the 50S ribosomal subunit. Contacts protein L20.

In terms of biological role, this protein binds to 23S rRNA in the presence of protein L20. This chain is Large ribosomal subunit protein bL21, found in Brucella anthropi (strain ATCC 49188 / DSM 6882 / CCUG 24695 / JCM 21032 / LMG 3331 / NBRC 15819 / NCTC 12168 / Alc 37) (Ochrobactrum anthropi).